The sequence spans 298 residues: Probable GTP 3',8-cyclase (298 aa).

A Radical SAM core domain is found at 4 to 227; that stretch reads RYGREIRSFR…MQNRKKYVID (224 aa). Arg13 is a binding site for GTP. Residues Cys20 and Cys24 each coordinate [4Fe-4S] cluster. Tyr26 is an S-adenosyl-L-methionine binding site. Cys27 contributes to the [4Fe-4S] cluster binding site. Residue Lys61 coordinates GTP. Gly65 is an S-adenosyl-L-methionine binding site. Residue Thr91 coordinates GTP. Position 115 (Ser115) interacts with S-adenosyl-L-methionine. GTP is bound at residue Lys152. [4Fe-4S] cluster-binding residues include Cys243 and Cys246. 248-250 serves as a coordination point for GTP; the sequence is RIR. Cys260 serves as a coordination point for [4Fe-4S] cluster.

The protein belongs to the radical SAM superfamily. MoaA family. Requires [4Fe-4S] cluster as cofactor.

The catalysed reaction is GTP + AH2 + S-adenosyl-L-methionine = (8S)-3',8-cyclo-7,8-dihydroguanosine 5'-triphosphate + 5'-deoxyadenosine + L-methionine + A + H(+). Its pathway is cofactor biosynthesis; molybdopterin biosynthesis. In terms of biological role, catalyzes the cyclization of GTP to (8S)-3',8-cyclo-7,8-dihydroguanosine 5'-triphosphate. The protein is Probable GTP 3',8-cyclase of Methanococcus maripaludis (strain C6 / ATCC BAA-1332).